Here is a 468-residue protein sequence, read N- to C-terminus: Glutamate--tRNA ligase (468 aa).

Positions P11 to N21 match the 'HIGH' region motif. A 'KMSKS' region motif is present at residues K243–R247. Position 246 (K246) interacts with ATP.

It belongs to the class-I aminoacyl-tRNA synthetase family. Glutamate--tRNA ligase type 1 subfamily. Monomer.

It is found in the cytoplasm. It catalyses the reaction tRNA(Glu) + L-glutamate + ATP = L-glutamyl-tRNA(Glu) + AMP + diphosphate. In terms of biological role, catalyzes the attachment of glutamate to tRNA(Glu) in a two-step reaction: glutamate is first activated by ATP to form Glu-AMP and then transferred to the acceptor end of tRNA(Glu). The protein is Glutamate--tRNA ligase of Delftia acidovorans (strain DSM 14801 / SPH-1).